The chain runs to 298 residues: Oxygen-dependent coproporphyrinogen-III oxidase (298 aa).

Serine 92 serves as a coordination point for substrate. Positions 96 and 106 each coordinate a divalent metal cation. The Proton donor role is filled by histidine 106. A substrate-binding site is contributed by 108–110 (NVR). 2 residues coordinate a divalent metal cation: histidine 145 and histidine 175. The tract at residues 239 to 274 (YVEFNLVYDRGTLFGLQSGGRSESILMSLPPRVRWE) is important for dimerization. 257–259 (GGR) contacts substrate.

It belongs to the aerobic coproporphyrinogen-III oxidase family. Homodimer. A divalent metal cation serves as cofactor.

The protein localises to the cytoplasm. It catalyses the reaction coproporphyrinogen III + O2 + 2 H(+) = protoporphyrinogen IX + 2 CO2 + 2 H2O. It participates in porphyrin-containing compound metabolism; protoporphyrin-IX biosynthesis; protoporphyrinogen-IX from coproporphyrinogen-III (O2 route): step 1/1. Involved in the heme biosynthesis. Catalyzes the aerobic oxidative decarboxylation of propionate groups of rings A and B of coproporphyrinogen-III to yield the vinyl groups in protoporphyrinogen-IX. This is Oxygen-dependent coproporphyrinogen-III oxidase from Stenotrophomonas maltophilia (strain R551-3).